We begin with the raw amino-acid sequence, 80 residues long: Probable Rubredoxin-1 (80 aa).

A Rubredoxin-like domain is found at 19-72 (YRKYKCKVCGWVYDPLKGDPSQNIPPKTPFEELPDTWICPVCRGKVGKESFEPL). Positions 24, 27, 57, and 60 each coordinate Fe cation.

This sequence belongs to the rubredoxin family. It depends on Fe(3+) as a cofactor.

Rubredoxin is a small nonheme, iron protein lacking acid-labile sulfide. Its single Fe, chelated to 4 Cys, functions as an electron acceptor and may also stabilize the conformation of the molecule. The chain is Probable Rubredoxin-1 from Methanocaldococcus jannaschii (strain ATCC 43067 / DSM 2661 / JAL-1 / JCM 10045 / NBRC 100440) (Methanococcus jannaschii).